The primary structure comprises 206 residues: Probable N-acetyltransferase 14 (206 aa).

One can recognise an N-acetyltransferase domain in the interval 6–206; the sequence is LSVREMREDE…TLVREFSKDL (201 aa). Residues 57-77 traverse the membrane as a helical segment; that stretch reads FVLASFALALLLPVFLAVAAV.

Belongs to the camello family. As to expression, expressed in K-562 and HeLa cell lines and in brain.

It localises to the membrane. Functionally, probable acetyltransferase. Its function is as follows. May act as a transcription factor that regulates the expression of coproporphyrinogen oxidase by binding to a promoter regulatory element. This Homo sapiens (Human) protein is Probable N-acetyltransferase 14 (NAT14).